We begin with the raw amino-acid sequence, 162 residues long: UPF0114 protein Sputw3181_3501 (162 aa).

3 consecutive transmembrane segments (helical) span residues 15-35 (IMAPIYLGLSLVLLGLGIKFF), 53-73 (LVLVTLSLIDITLVGGLIVMV), and 136-156 (IMWYLLIHITFVLSAFAMGYL).

Belongs to the UPF0114 family.

It localises to the cell membrane. In Shewanella sp. (strain W3-18-1), this protein is UPF0114 protein Sputw3181_3501.